Consider the following 180-residue polypeptide: Large ribosomal subunit protein uL22 (180 aa).

The tract at residues 111–180 is disordered; that stretch reads VVVESRPAKD…ETSDAKGGSD (70 aa). Over residues 142–166 the composition is skewed to basic residues; sequence PAKKAPAKKAPAKKAPAKTAAKKTP. A compositionally biased stretch (basic and acidic residues) spans 171–180; sequence ETSDAKGGSD.

Belongs to the universal ribosomal protein uL22 family. Part of the 50S ribosomal subunit.

Its function is as follows. This protein binds specifically to 23S rRNA; its binding is stimulated by other ribosomal proteins, e.g. L4, L17, and L20. It is important during the early stages of 50S assembly. It makes multiple contacts with different domains of the 23S rRNA in the assembled 50S subunit and ribosome. The globular domain of the protein is located near the polypeptide exit tunnel on the outside of the subunit, while an extended beta-hairpin is found that lines the wall of the exit tunnel in the center of the 70S ribosome. This is Large ribosomal subunit protein uL22 from Mycobacterium avium (strain 104).